Reading from the N-terminus, the 302-residue chain is Phytoene synthase (302 aa).

This sequence belongs to the phytoene/squalene synthase family. Requires ATP as cofactor. It depends on Mn(2+) as a cofactor. The cofactor is Mg(2+).

The protein operates within carotenoid biosynthesis; phytoene biosynthesis. In terms of biological role, involved in the biosynthesis of carotenoids. Catalyzes the condensation of two molecules of geranylgeranyl diphosphate (GGPP) to give prephytoene diphosphate (PPPP) and the subsequent rearrangement of the cyclopropylcarbinyl intermediate to yield phytoene. The polypeptide is Phytoene synthase (crtB) (Mycobacterium bovis (strain ATCC BAA-935 / AF2122/97)).